Here is a 233-residue protein sequence, read N- to C-terminus: Phosphoribosylformylglycinamidine synthase subunit PurQ (233 aa).

Residues 3–233 (SAVLVFPGIN…GLVAHLERAA (231 aa)) enclose the Glutamine amidotransferase type-1 domain. The active-site Nucleophile is Cys87. Active-site residues include His204 and Glu206.

As to quaternary structure, part of the FGAM synthase complex composed of 1 PurL, 1 PurQ and 2 PurS subunits.

It is found in the cytoplasm. The catalysed reaction is N(2)-formyl-N(1)-(5-phospho-beta-D-ribosyl)glycinamide + L-glutamine + ATP + H2O = 2-formamido-N(1)-(5-O-phospho-beta-D-ribosyl)acetamidine + L-glutamate + ADP + phosphate + H(+). It catalyses the reaction L-glutamine + H2O = L-glutamate + NH4(+). It participates in purine metabolism; IMP biosynthesis via de novo pathway; 5-amino-1-(5-phospho-D-ribosyl)imidazole from N(2)-formyl-N(1)-(5-phospho-D-ribosyl)glycinamide: step 1/2. Part of the phosphoribosylformylglycinamidine synthase complex involved in the purines biosynthetic pathway. Catalyzes the ATP-dependent conversion of formylglycinamide ribonucleotide (FGAR) and glutamine to yield formylglycinamidine ribonucleotide (FGAM) and glutamate. The FGAM synthase complex is composed of three subunits. PurQ produces an ammonia molecule by converting glutamine to glutamate. PurL transfers the ammonia molecule to FGAR to form FGAM in an ATP-dependent manner. PurS interacts with PurQ and PurL and is thought to assist in the transfer of the ammonia molecule from PurQ to PurL. This is Phosphoribosylformylglycinamidine synthase subunit PurQ from Nitrobacter winogradskyi (strain ATCC 25391 / DSM 10237 / CIP 104748 / NCIMB 11846 / Nb-255).